The chain runs to 210 residues: Probable nicotinate-nucleotide adenylyltransferase (210 aa).

It belongs to the NadD family.

The catalysed reaction is nicotinate beta-D-ribonucleotide + ATP + H(+) = deamido-NAD(+) + diphosphate. The protein operates within cofactor biosynthesis; NAD(+) biosynthesis; deamido-NAD(+) from nicotinate D-ribonucleotide: step 1/1. Functionally, catalyzes the reversible adenylation of nicotinate mononucleotide (NaMN) to nicotinic acid adenine dinucleotide (NaAD). In Streptococcus pyogenes serotype M6 (strain ATCC BAA-946 / MGAS10394), this protein is Probable nicotinate-nucleotide adenylyltransferase.